A 118-amino-acid polypeptide reads, in one-letter code: Large ribosomal subunit protein bL20 (118 aa).

The protein belongs to the bacterial ribosomal protein bL20 family.

Its function is as follows. Binds directly to 23S ribosomal RNA and is necessary for the in vitro assembly process of the 50S ribosomal subunit. It is not involved in the protein synthesizing functions of that subunit. The chain is Large ribosomal subunit protein bL20 from Proteus mirabilis (strain HI4320).